Consider the following 183-residue polypeptide: GTP cyclohydrolase 1 (183 aa).

Zn(2+) is bound by residues cysteine 71, histidine 74, and cysteine 142.

This sequence belongs to the GTP cyclohydrolase I family. In terms of assembly, homomer.

The catalysed reaction is GTP + H2O = 7,8-dihydroneopterin 3'-triphosphate + formate + H(+). It participates in cofactor biosynthesis; 7,8-dihydroneopterin triphosphate biosynthesis; 7,8-dihydroneopterin triphosphate from GTP: step 1/1. The protein is GTP cyclohydrolase 1 of Leptospira biflexa serovar Patoc (strain Patoc 1 / Ames).